The sequence spans 96 residues: Transmembrane protein PMIS2 (96 aa).

2 helical membrane passes run 31–51 (VMLALLAMILFLPFGILAIYF) and 76–96 (WFNMLAIVAFVGIIYILVLVL).

It belongs to the CD225/Dispanin family. As to expression, specifically expressed in testis.

The protein resides in the membrane. Functionally, may play a role in spermatozoa mobility. The sequence is that of Transmembrane protein PMIS2 from Mus musculus (Mouse).